A 69-amino-acid polypeptide reads, in one-letter code: Alternative ribosome-rescue factor A (69 aa).

The protein belongs to the alternative ribosome-rescue factor A family. As to quaternary structure, interacts with the 70S ribosome and release factor 2.

Its function is as follows. Rescues ribosomes stalled at the 3' end of non-stop mRNAs. Recruits release factor 2 (RF2) to the stalled ribosome, helping position it correctly in the ribosomal A site so its GGQ motif can hydrolyze the peptidyl-tRNA bond. This chain is Alternative ribosome-rescue factor A (arfA), found in Haemophilus influenzae (strain ATCC 51907 / DSM 11121 / KW20 / Rd).